Reading from the N-terminus, the 377-residue chain is tRNA-specific 2-thiouridylase MnmA (377 aa).

ATP-binding positions include 12-19 (GMSGGVDS) and Met-38. An interaction with target base in tRNA region spans residues 98-100 (NPD). Cys-103 serves as the catalytic Nucleophile. Cys-103 and Cys-200 form a disulfide bridge. Gly-127 contributes to the ATP binding site. Residues 150 to 152 (KDQ) are interaction with tRNA. Cys-200 acts as the Cysteine persulfide intermediate in catalysis. The segment at 314–315 (RY) is interaction with tRNA.

It belongs to the MnmA/TRMU family.

The protein resides in the cytoplasm. The enzyme catalyses S-sulfanyl-L-cysteinyl-[protein] + uridine(34) in tRNA + AH2 + ATP = 2-thiouridine(34) in tRNA + L-cysteinyl-[protein] + A + AMP + diphosphate + H(+). Functionally, catalyzes the 2-thiolation of uridine at the wobble position (U34) of tRNA, leading to the formation of s(2)U34. The sequence is that of tRNA-specific 2-thiouridylase MnmA from Limosilactobacillus fermentum (strain NBRC 3956 / LMG 18251) (Lactobacillus fermentum).